A 321-amino-acid chain; its full sequence is Peroxidase 28 (321 aa).

Positions 1 to 21 are cleaved as a signal peptide; sequence MKIATFSVLLLLLFIFPVALA. 4 cysteine pairs are disulfide-bonded: Cys-32-Cys-111, Cys-65-Cys-70, Cys-117-Cys-317, and Cys-196-Cys-228. His-63 acts as the Proton acceptor in catalysis. Ca(2+) contacts are provided by Asp-64, Val-67, Gly-69, Asp-71, and Ser-73. A substrate-binding site is contributed by Pro-159. Position 189 (His-189) interacts with heme b. Ca(2+) is bound at residue Thr-190. Asp-238, Thr-244, and Asp-249 together coordinate Ca(2+).

Belongs to the peroxidase family. Classical plant (class III) peroxidase subfamily. Heme b is required as a cofactor. The cofactor is Ca(2+).

It is found in the secreted. It carries out the reaction 2 a phenolic donor + H2O2 = 2 a phenolic radical donor + 2 H2O. Removal of H(2)O(2), oxidation of toxic reductants, biosynthesis and degradation of lignin, suberization, auxin catabolism, response to environmental stresses such as wounding, pathogen attack and oxidative stress. These functions might be dependent on each isozyme/isoform in each plant tissue. This is Peroxidase 28 (PER28) from Arabidopsis thaliana (Mouse-ear cress).